The sequence spans 383 residues: Protein delta homolog 2 (383 aa).

Residues 1–26 form the signal peptide; it reads MPSGCRCLHLVCLLCILAAPVKPVRA. EGF-like domains are found at residues 27 to 58, 62 to 89, 91 to 129, and 131 to 172; these read DDCS…LHCE, RMPG…KFCD, DEHV…RDCE, and KEGP…AHCE. Residues 27–306 are Extracellular-facing; sequence DDCSSHCDLA…RQEAGLGKSS (280 aa). 17 disulfide bridges follow: Cys-29-Cys-40, Cys-33-Cys-46, Cys-48-Cys-57, Cys-66-Cys-71, Cys-79-Cys-88, Cys-95-Cys-107, Cys-101-Cys-117, Cys-119-Cys-128, Cys-135-Cys-148, Cys-142-Cys-160, Cys-162-Cys-171, Cys-178-Cys-189, Cys-183-Cys-198, Cys-200-Cys-209, Cys-216-Cys-227, Cys-221-Cys-236, and Cys-238-Cys-247. Asn-157 carries an N-linked (GlcNAc...) asparagine glycan. Positions 174–210 constitute an EGF-like 5; calcium-binding domain; sequence NVDDCLMRPCANGATCLDGINRFSCLCPEGFAGRFCT. The EGF-like 6; calcium-binding domain maps to 212–248; the sequence is NLDDCASRPCQRGARCRDRVHDFDCLCPSGYGGKTCE. The chain crosses the membrane as a helical span at residues 307–327; sequence LVAVVVFGAVTATLVLSTVLL. Over 328 to 383 the chain is Cytoplasmic; that stretch reads TLRAWRRGVCPPGPCCYPAPHYAPARQDQECQVSMLPAGLPLPPDLPPEPGKTTAL.

It localises to the membrane. Its function is as follows. Regulates adipogenesis. In Sus scrofa (Pig), this protein is Protein delta homolog 2 (DLK2).